The chain runs to 434 residues: RNA-binding protein SRO9 (434 aa).

Residues 1–13 (MSAETAAANTATA) are compositionally biased toward low complexity. Positions 1–243 (MSAETAAANT…FHHNQQHPQQ (243 aa)) are disordered. The span at 26–41 (SKQVNLTPAPLPTSSP) shows a compositional bias: polar residues. Ser55 bears the Phosphoserine mark. The segment covering 93–124 (KRSGSKNGASNGNSNKSKNNKTAASSTSSSNA) has biased composition (low complexity). A compositionally biased stretch (basic residues) spans 125–140 (NRKKKHHQHNAKKQQQ). Phosphoserine is present on Ser148. Lys156 is covalently cross-linked (Glycyl lysine isopeptide (Lys-Gly) (interchain with G-Cter in ubiquitin)). The segment covering 158 to 167 (ATSQENGQST) has biased composition (polar residues). A compositionally biased stretch (basic residues) spans 173-195 (PHHRNHHHSHHHNSNGPQRRKFH). Positions 196–208 (NSNNAGMPQNQGF) are enriched in polar residues. Residues 218 to 227 (RNARNNNNNR) are compositionally biased toward low complexity. A compositionally biased stretch (basic residues) spans 228–238 (SKYHNHFHHNQ). In terms of domain architecture, HTH La-type RNA-binding spans 255–351 (VQPVLMAINN…KEGDNVTGEA (97 aa)). Residues Lys301, Lys342, and Lys352 each participate in a glycyl lysine isopeptide (Lys-Gly) (interchain with G-Cter in ubiquitin) cross-link. The interval 396–434 (SLPPVPQQEEESSTELASQEQETKEDSAPVAAGESESSL) is disordered. Residue Ser422 is modified to Phosphoserine.

Interacts with HAP1. Component of the HMC including HAP1, SRO9 and YDJ1.

It localises to the cytoplasm. May overlap in function with tropomyosin and may be involved in organization of actin filaments. Acts as a multicopy suppressor of RHO3 mutation. RNA-binding protein which may modulate mRNA translation. Involved in heme regulation of HAP1, as a component of the high-molecular-weight complex (HMC). The polypeptide is RNA-binding protein SRO9 (SRO9) (Saccharomyces cerevisiae (strain ATCC 204508 / S288c) (Baker's yeast)).